A 318-amino-acid chain; its full sequence is NADH-ubiquinone oxidoreductase chain 1 (318 aa).

The next 8 membrane-spanning stretches (helical) occupy residues 2–22 (FTIN…FLTL), 70–90 (MFII…VPLP), 100–120 (LGVL…LWSG), 146–166 (LAII…STLI), 171–191 (HLWL…STLA), 222–242 (LFFM…TILF), 253–273 (ELYT…FLWI), and 294–314 (LPLT…MSSI).

The protein belongs to the complex I subunit 1 family.

The protein resides in the mitochondrion inner membrane. It carries out the reaction a ubiquinone + NADH + 5 H(+)(in) = a ubiquinol + NAD(+) + 4 H(+)(out). In terms of biological role, core subunit of the mitochondrial membrane respiratory chain NADH dehydrogenase (Complex I) that is believed to belong to the minimal assembly required for catalysis. Complex I functions in the transfer of electrons from NADH to the respiratory chain. The immediate electron acceptor for the enzyme is believed to be ubiquinone. This Rhinoceros unicornis (Greater Indian rhinoceros) protein is NADH-ubiquinone oxidoreductase chain 1 (MT-ND1).